We begin with the raw amino-acid sequence, 207 residues long: Small ribosomal subunit protein uS4 (207 aa).

The region spanning Ser-96 to Arg-156 is the S4 RNA-binding domain.

Belongs to the universal ribosomal protein uS4 family. In terms of assembly, part of the 30S ribosomal subunit. Contacts protein S5. The interaction surface between S4 and S5 is involved in control of translational fidelity.

Functionally, one of the primary rRNA binding proteins, it binds directly to 16S rRNA where it nucleates assembly of the body of the 30S subunit. Its function is as follows. With S5 and S12 plays an important role in translational accuracy. The protein is Small ribosomal subunit protein uS4 of Blochmanniella pennsylvanica (strain BPEN).